We begin with the raw amino-acid sequence, 59 residues long: Large ribosomal subunit protein bL32 (59 aa).

A disordered region spans residues 35 to 59 (EAHLRHHISPNGYYRGRKVVKTKND). A compositionally biased stretch (basic residues) spans 49–59 (RGRKVVKTKND).

Belongs to the bacterial ribosomal protein bL32 family.

The polypeptide is Large ribosomal subunit protein bL32 (Polynucleobacter asymbioticus (strain DSM 18221 / CIP 109841 / QLW-P1DMWA-1) (Polynucleobacter necessarius subsp. asymbioticus)).